Consider the following 288-residue polypeptide: Ribosomal protein L11 methyltransferase (288 aa).

Residues Thr141, Gly164, Asp186, and Asn227 each coordinate S-adenosyl-L-methionine.

This sequence belongs to the methyltransferase superfamily. PrmA family.

The protein resides in the cytoplasm. It carries out the reaction L-lysyl-[protein] + 3 S-adenosyl-L-methionine = N(6),N(6),N(6)-trimethyl-L-lysyl-[protein] + 3 S-adenosyl-L-homocysteine + 3 H(+). Functionally, methylates ribosomal protein L11. This is Ribosomal protein L11 methyltransferase from Myxococcus xanthus (strain DK1622).